Here is a 196-residue protein sequence, read N- to C-terminus: GTP cyclohydrolase-2 (196 aa).

Residue 49–53 coordinates GTP; sequence RVHSE. The Zn(2+) site is built by Cys54, Cys65, and Cys67. GTP-binding positions include Gln70, 92–94, and Thr114; that span reads EGR. The active-site Proton acceptor is Asp126. Residue Arg128 is the Nucleophile of the active site. Positions 149 and 154 each coordinate GTP.

This sequence belongs to the GTP cyclohydrolase II family. Homodimer. The cofactor is Zn(2+).

It catalyses the reaction GTP + 4 H2O = 2,5-diamino-6-hydroxy-4-(5-phosphoribosylamino)-pyrimidine + formate + 2 phosphate + 3 H(+). Its pathway is cofactor biosynthesis; riboflavin biosynthesis; 5-amino-6-(D-ribitylamino)uracil from GTP: step 1/4. Functionally, catalyzes the conversion of GTP to 2,5-diamino-6-ribosylamino-4(3H)-pyrimidinone 5'-phosphate (DARP), formate and pyrophosphate. This is GTP cyclohydrolase-2 from Escherichia coli O45:K1 (strain S88 / ExPEC).